We begin with the raw amino-acid sequence, 496 residues long: Amino-acid acetyltransferase, mitochondrial (496 aa).

One can recognise an N-acetyltransferase domain in the interval 333–493 (YHGTDCLTNG…LDVIDSIQPT (161 aa)).

The protein belongs to the acetyltransferase family.

The protein localises to the mitochondrion. It catalyses the reaction L-glutamate + acetyl-CoA = N-acetyl-L-glutamate + CoA + H(+). Its pathway is amino-acid biosynthesis; L-arginine biosynthesis; N(2)-acetyl-L-ornithine from L-glutamate: step 1/4. N-acetylglutamate synthase involved in arginine biosynthesis. This chain is Amino-acid acetyltransferase, mitochondrial (arg2), found in Schizosaccharomyces japonicus (strain yFS275 / FY16936) (Fission yeast).